A 222-amino-acid polypeptide reads, in one-letter code: Peroxiredoxin (222 aa).

The 156-residue stretch at 2–157 (VVLGQKFPEV…ILRLVEALQT (156 aa)) folds into the Thioredoxin domain. The active-site Cysteine sulfenic acid (-SOH) intermediate is Cys-44. Arg-120 is a substrate binding site. A disulfide bridge connects residues Cys-211 and Cys-217.

The protein belongs to the peroxiredoxin family. Prx6 subfamily. In terms of assembly, homodecamer. Pentamer of dimers that assemble into a ring structure.

It localises to the cytoplasm. It carries out the reaction a hydroperoxide + [thioredoxin]-dithiol = an alcohol + [thioredoxin]-disulfide + H2O. Thiol-specific peroxidase that catalyzes the reduction of hydrogen peroxide and organic hydroperoxides to water and alcohols, respectively. Plays a role in cell protection against oxidative stress by detoxifying peroxides. The polypeptide is Peroxiredoxin (Nanoarchaeum equitans (strain Kin4-M)).